We begin with the raw amino-acid sequence, 475 residues long: Peroxisome proliferator-activated receptor gamma (475 aa).

At S82 the chain carries Phosphoserine; by MAPK. Residues 106–180 (AIECRVCSDK…VGMSHNAIRF (75 aa)) constitute a DNA-binding region (nuclear receptor). NR C4-type zinc fingers lie at residues 109 to 129 (CRVCSDKASGFHYGVHACEGC) and 146 to 168 (CDLNCRIHKKSRNKCQYCRFQKC). The tract at residues 175–250 (HNAIRFGRMP…DKSPFVIYDM (76 aa)) is interaction with FAM120B. In terms of domain architecture, NR LBD spans 208 to 473 (DLRALAKHLY…HPLLQEIYKD (266 aa)). K222 is covalently cross-linked (Glycyl lysine isopeptide (Lys-Gly) (interchain with G-Cter in ubiquitin)). Positions 465-473 (PLLQEIYKD) match the 9aaTAD motif.

It belongs to the nuclear hormone receptor family. NR1 subfamily. As to quaternary structure, interacts with FOXO1 (acetylated form). Heterodimer with other nuclear receptors, such as RXRA. The heterodimer with the retinoic acid receptor RXRA is called adipocyte-specific transcription factor ARF6. Interacts with NCOA6 coactivator, leading to a strong increase in transcription of target genes. Interacts with coactivator PPARBP, leading to a mild increase in transcription of target genes. Interacts with NOCA7 in a ligand-inducible manner. Interacts with NCOA1 and NCOA2 LXXLL motifs. Interacts with ASXL1, ASXL2, DNTTIP2, FAM120B, MAP2K1/MEK1, NR0B2, PDPK1, PRDM16, PRMT2 and TGFB1I1. Interacts (when activated by agonist) with PPP5C. Interacts with HELZ2 and THRAP3; the interaction stimulates the transcriptional activity of PPARG. Interacts with PER2, the interaction is ligand dependent and blocks PPARG recruitment to target promoters. Interacts with NOCT. Interacts with ACTN4. Interacts (when in the liganded conformation) with GPS2. Interacts with CRY1 and CRY2 in a ligand-dependent manner. In the absence of hormonal ligand, interacts with TACC1. In macrophages, interacts with PAQR3 and STUB1; the interactions promote PPARG poylubiquitination and STUB1-mediated degradation. In terms of processing, phosphorylated at basal conditions and dephosphorylated when treated with the ligand. May be dephosphorylated by PPP5C. The phosphorylated form may be inactive and dephosphorylation induces adipogenic activity. Ubiquitinated by E3 ubiquitin-protein ligase complex containing FBXO9; leading to proteasomal degradation. Ubiquitinated at Lys-222 by TRIM55 leading to proteasomal degradation. Ubiquitinated by E3 ubiquitin-protein ligase STUB1/CHIP; leading to proteasomal degradation.

The protein resides in the nucleus. Its subcellular location is the cytoplasm. PDPK1 activates its transcriptional activity independently of its kinase activity. In terms of biological role, nuclear receptor that binds peroxisome proliferators such as hypolipidemic drugs and fatty acids. Once activated by a ligand, the nuclear receptor binds to DNA specific PPAR response elements (PPRE) and modulates the transcription of its target genes, such as acyl-CoA oxidase. It therefore controls the peroxisomal beta-oxidation pathway of fatty acids. Key regulator of adipocyte differentiation and glucose homeostasis. ARF6 acts as a key regulator of the tissue-specific adipocyte P2 (aP2) enhancer. Acts as a critical regulator of gut homeostasis by suppressing NF-kappa-B-mediated pro-inflammatory responses. Plays a role in the regulation of cardiovascular circadian rhythms by regulating the transcription of BMAL1 in the blood vessels. In Oryctolagus cuniculus (Rabbit), this protein is Peroxisome proliferator-activated receptor gamma (PPARG).